We begin with the raw amino-acid sequence, 157 residues long: 2-C-methyl-D-erythritol 2,4-cyclodiphosphate synthase (157 aa).

A divalent metal cation is bound by residues Asp9 and His11. 4-CDP-2-C-methyl-D-erythritol 2-phosphate-binding positions include 9 to 11 (DVH) and 35 to 36 (HS). His43 is a binding site for a divalent metal cation. 4-CDP-2-C-methyl-D-erythritol 2-phosphate contacts are provided by residues 57–59 (DIG), 62–66 (FPDTD), 101–107 (AEKPKMA), 133–136 (TTTE), Phe140, and Arg143.

This sequence belongs to the IspF family. In terms of assembly, homotrimer. Requires a divalent metal cation as cofactor.

It catalyses the reaction 4-CDP-2-C-methyl-D-erythritol 2-phosphate = 2-C-methyl-D-erythritol 2,4-cyclic diphosphate + CMP. The protein operates within isoprenoid biosynthesis; isopentenyl diphosphate biosynthesis via DXP pathway; isopentenyl diphosphate from 1-deoxy-D-xylulose 5-phosphate: step 4/6. In terms of biological role, involved in the biosynthesis of isopentenyl diphosphate (IPP) and dimethylallyl diphosphate (DMAPP), two major building blocks of isoprenoid compounds. Catalyzes the conversion of 4-diphosphocytidyl-2-C-methyl-D-erythritol 2-phosphate (CDP-ME2P) to 2-C-methyl-D-erythritol 2,4-cyclodiphosphate (ME-CPP) with a corresponding release of cytidine 5-monophosphate (CMP). This chain is 2-C-methyl-D-erythritol 2,4-cyclodiphosphate synthase, found in Listeria monocytogenes serotype 4b (strain F2365).